A 79-amino-acid chain; its full sequence is Metallothionein-like protein type 2 (79 aa).

The protein belongs to the metallothionein superfamily. Type 15 family.

Its function is as follows. Metallothioneins have a high content of cysteine residues that bind various heavy metals. The chain is Metallothionein-like protein type 2 (MT1) from Malus domestica (Apple).